Consider the following 200-residue polypeptide: MSNSAQRDARNSRDESARASDTDRIQIAQLLAYAAEQGRLQLTDYEDRLARAYAATTYQELDRLRADLPGAAIGPRRGGECNPAPSTLLLALLGGFERRGRWNVPKKLTTFTLWGSGVLDLRYADFTSTEVDIRAYSIMGAQTILLPPEVNVEIHGHRVMGGFDRKVVGEGTRGAPTVRIRGFSLWGDVGIKRKPRKPRK.

Residues 1-21 are disordered; it reads MSNSAQRDARNSRDESARASD. Residues 7–21 show a composition bias toward basic and acidic residues; that stretch reads RDARNSRDESARASD.

This is an uncharacterized protein from Mycobacterium tuberculosis (strain CDC 1551 / Oshkosh).